We begin with the raw amino-acid sequence, 430 residues long: 3-phosphoshikimate 1-carboxyvinyltransferase (430 aa).

Positions 21, 22, and 26 each coordinate 3-phosphoshikimate. Lys21 lines the phosphoenolpyruvate pocket. Phosphoenolpyruvate-binding residues include Gly94 and Arg122. 4 residues coordinate 3-phosphoshikimate: Ser167, Gln169, Asp317, and Lys344. Gln169 contacts phosphoenolpyruvate. Asp317 serves as the catalytic Proton acceptor. Arg348 and Arg390 together coordinate phosphoenolpyruvate.

Belongs to the EPSP synthase family. In terms of assembly, monomer.

It is found in the cytoplasm. It carries out the reaction 3-phosphoshikimate + phosphoenolpyruvate = 5-O-(1-carboxyvinyl)-3-phosphoshikimate + phosphate. It functions in the pathway metabolic intermediate biosynthesis; chorismate biosynthesis; chorismate from D-erythrose 4-phosphate and phosphoenolpyruvate: step 6/7. Catalyzes the transfer of the enolpyruvyl moiety of phosphoenolpyruvate (PEP) to the 5-hydroxyl of shikimate-3-phosphate (S3P) to produce enolpyruvyl shikimate-3-phosphate and inorganic phosphate. The protein is 3-phosphoshikimate 1-carboxyvinyltransferase of Thermodesulfovibrio yellowstonii (strain ATCC 51303 / DSM 11347 / YP87).